The following is a 78-amino-acid chain: Probable [Fe-S]-dependent transcriptional repressor (78 aa).

The iron-sulfur cluster site is built by Cys56, Cys61, Cys64, and Cys70.

Belongs to the FeoC family.

May function as a transcriptional regulator that controls feoABC expression. The polypeptide is Probable [Fe-S]-dependent transcriptional repressor (Cronobacter sakazakii (strain ATCC BAA-894) (Enterobacter sakazakii)).